The chain runs to 236 residues: Probable glutathione S-transferase BZ2 (236 aa).

The GST N-terminal domain maps to 1–80 (MRVLGGEVSP…YIEDVARESG (80 aa)). Glutathione is bound by residues serine 9, lysine 37, isoleucine 51, and 64 to 65 (ES). The GST C-terminal domain maps to 92 to 221 (DPYERAMHRF…LPDTEKVVQF (130 aa)).

It belongs to the GST superfamily. HSP26 family.

The catalysed reaction is RX + glutathione = an S-substituted glutathione + a halide anion + H(+). It functions in the pathway pigment biosynthesis; anthocyanin biosynthesis. The chain is Probable glutathione S-transferase BZ2 (BZ2) from Zea mays (Maize).